The sequence spans 113 residues: Hydrogenase maturation factor HypA (113 aa).

Histidine 2 provides a ligand contact to Ni(2+). The Zn(2+) site is built by cysteine 73, cysteine 76, cysteine 89, and cysteine 92.

This sequence belongs to the HypA/HybF family.

Functionally, involved in the maturation of [NiFe] hydrogenases. Required for nickel insertion into the metal center of the hydrogenase. This Azotobacter chroococcum mcd 1 protein is Hydrogenase maturation factor HypA.